Reading from the N-terminus, the 355-residue chain is Glucose-1-phosphate thymidylyltransferase (355 aa).

Mg(2+) is bound by residues Asp-107 and Asp-220.

This sequence belongs to the glucose-1-phosphate thymidylyltransferase family. Mg(2+) serves as cofactor.

It catalyses the reaction dTTP + alpha-D-glucose 1-phosphate + H(+) = dTDP-alpha-D-glucose + diphosphate. Its pathway is antibiotic biosynthesis; streptomycin biosynthesis. In terms of biological role, involved in the biosynthesis of the streptose moiety of streptomycin. Catalyzes the formation of dTDP-glucose, from dTTP and glucose 1-phosphate, as well as its pyrophosphorolysis. The chain is Glucose-1-phosphate thymidylyltransferase (strD) from Streptomyces griseus.